The primary structure comprises 303 residues: Recombination-associated protein RdgC (303 aa).

It belongs to the RdgC family.

Its subcellular location is the cytoplasm. The protein resides in the nucleoid. In terms of biological role, may be involved in recombination. The polypeptide is Recombination-associated protein RdgC (Enterobacter sp. (strain 638)).